A 239-amino-acid chain; its full sequence is Ribonuclease HII (239 aa).

Positions 18-231 (KIIVGLDEAG…SKNLLKEIEE (214 aa)) constitute an RNase H type-2 domain. Positions 24, 25, and 125 each coordinate a divalent metal cation.

Belongs to the RNase HII family. The cofactor is Mn(2+). Mg(2+) serves as cofactor.

The protein resides in the cytoplasm. It catalyses the reaction Endonucleolytic cleavage to 5'-phosphomonoester.. In terms of biological role, endonuclease that specifically degrades the RNA of RNA-DNA hybrids. The chain is Ribonuclease HII from Methanococcus maripaludis (strain C5 / ATCC BAA-1333).